A 454-amino-acid polypeptide reads, in one-letter code: MGRTYIVEETVGQYLSNIGLQGKAFVSGLLIGQCSSQKDYVILATRTPPKEEQSENLKHLKAKLDNLDEEWATEHACQVSRMLPGGLLVLGVFIITTLELANDFQNALRRLMFAVEKSINRKRLWNFTEEEVSERVTLHICASTKKKIFCRTYDIHDPKSSARPADWKYQSGLSSSWLSLECTVHINIHIPLSATSVSYTLEKNTKNGLTRWAKEIENGVYLINGQVKDEDCDLLEGQKKSRGNTQATSHSFDVRVLTQLLLNSDHRSTATVQICSGSVNLKGAVKCRAYIHSSKPKVKDAVQAVKRDILNTVADRCEILFEDLLLNEIPEKKDSEKEFHVLPYRVFVPLPGSTVMLCDYKFDDESAEEIRDHFMEMLDHTIKIEDLEIAEETNTACMSSSMNSQASLDNTDDEQPKQPIKTTMLLKIQQNIGVIAAFTVAVLAAGISFHYFSD.

Transmembrane regions (helical) follow at residues 82–102 and 432–452; these read MLPGGLLVLGVFIITTLELAN and IGVIAAFTVAVLAAGISFHYF.

Belongs to the ODR-4 family.

The protein resides in the membrane. Its function is as follows. May play a role in the trafficking of a subset of G-protein coupled receptors. The chain is Protein odr-4 homolog (ODR4) from Pongo abelii (Sumatran orangutan).